A 962-amino-acid chain; its full sequence is Glycine dehydrogenase (decarboxylating) (962 aa).

Lysine 709 is modified (N6-(pyridoxal phosphate)lysine).

The protein belongs to the GcvP family. As to quaternary structure, the glycine cleavage system is composed of four proteins: P, T, L and H. Requires pyridoxal 5'-phosphate as cofactor.

The catalysed reaction is N(6)-[(R)-lipoyl]-L-lysyl-[glycine-cleavage complex H protein] + glycine + H(+) = N(6)-[(R)-S(8)-aminomethyldihydrolipoyl]-L-lysyl-[glycine-cleavage complex H protein] + CO2. In terms of biological role, the glycine cleavage system catalyzes the degradation of glycine. The P protein binds the alpha-amino group of glycine through its pyridoxal phosphate cofactor; CO(2) is released and the remaining methylamine moiety is then transferred to the lipoamide cofactor of the H protein. The protein is Glycine dehydrogenase (decarboxylating) of Shewanella frigidimarina (strain NCIMB 400).